A 216-amino-acid polypeptide reads, in one-letter code: MKSNKLMALGIVFSIAVLIVIGTIAYSIINDKKDKGNEMFAYSTQQSLGKDDAPVKVVEFGDFKCPACRTWDVTVLPRLKEEYIDKGKVQLYFINFPFIGKDSDLGAAAGEAIYKQDKDSFWIFYDEIYQNQKKDTEEWITEDLLLSIVKEKLPKVDVEQFKKDLHSKDIKEKVSKDSDRAQKLKVQGAPSVYVNGNLANPDFDSMKKAIDKELKK.

Positions 1–25 are cleaved as a signal peptide; the sequence is MKSNKLMALGIVFSIAVLIVIGTIA. An intrachain disulfide couples cysteine 65 to cysteine 68.

It belongs to the thioredoxin family. DsbA subfamily.

Its function is as follows. May be required for disulfide bond formation in some proteins. This Bacillus cereus (strain ATCC 14579 / DSM 31 / CCUG 7414 / JCM 2152 / NBRC 15305 / NCIMB 9373 / NCTC 2599 / NRRL B-3711) protein is Probable disulfide bond formation protein D (bdbD).